The chain runs to 456 residues: Trigger factor (456 aa).

The PPIase FKBP-type domain occupies G192–P277.

The protein belongs to the FKBP-type PPIase family. Tig subfamily.

The protein localises to the cytoplasm. The enzyme catalyses [protein]-peptidylproline (omega=180) = [protein]-peptidylproline (omega=0). Involved in protein export. Acts as a chaperone by maintaining the newly synthesized protein in an open conformation. Functions as a peptidyl-prolyl cis-trans isomerase. In Streptococcus pyogenes serotype M2 (strain MGAS10270), this protein is Trigger factor.